The primary structure comprises 1055 residues: TNF receptor-associated factor homolog 1a (1055 aa).

The tract at residues 1-56 is disordered; it reads MSESTNEDSGAGRSSLEENSNGQRSQSEEAIAEWRSSEQVENGTPSTSPPYWDIDD. Positions 37 to 46 are enriched in polar residues; it reads SEQVENGTPS. In terms of domain architecture, MATH spans 68–191; it reads FGKNTWTIEK…SGCLTIKAQV (124 aa). 4 disordered regions span residues 352–380, 431–590, 603–772, and 820–845; these read PKKEEKSSQNRTKDGNAGEEFSREAVERD, AESE…NGSY, FSNG…APII, and VGSSGFTHPSSQSSGTSTLPPYSHPS. Basic and acidic residues predominate over residues 433-446; it reads SEQKGKRGASEKEK. Positions 441-496 form a coiled coil; that stretch reads ASEKEKKSKKKQAKQKKNKNKGKEMRKEDKVRTQTEEREIEKEECVRAIAESSAEK. A compositionally biased stretch (basic residues) spans 447-460; it reads KSKKKQAKQKKNKN. Residues 461-486 show a composition bias toward basic and acidic residues; sequence KGKEMRKEDKVRTQTEEREIEKEECV. The span at 502–513 shows a compositional bias: low complexity; that stretch reads DVSDVSDSVDSS. Residues 524–537 show a composition bias toward basic and acidic residues; sequence RESSPVHWEMDASE. Positions 569–586 are enriched in polar residues; that stretch reads MDDSSSTCSNDSIQSGVA. A compositionally biased stretch (basic and acidic residues) spans 657-668; the sequence is QKPESPKERSPV. 2 stretches are compositionally biased toward polar residues: residues 723–740 and 823–845; these read KSPSSHHASPSREAQLQT and SGFTHPSSQSSGTSTLPPYSHPS.

In terms of assembly, interacts with AHK3. Interacts with ATG6, SINAT1, SINAT2, SINAT5 and SINAT6.

It is found in the cytoplasm. In terms of biological role, functions redundantly with TRAF1B in the regulation of plant immune response. Contributes to the turnover of the nucleotide-binding domain and leucine-rich repeat-containing (NB-LRR) immune receptors SNC1 and RPS2. May associate with an E3 ubiquitin-protein ligase complex, which modulates ubiquitination and subsequent degradation of NB-LRR immune sensors to maintain their homeostasis. Functions redundantly with TRAF1B in the regulation of autophagosome formation. Required for SINAT1- and SINAT2-mediated ubiquitination and destabilization of ATG6. Functions as a molecular adapter that helps to regulate autophagy by modulating ATG6 stability. The polypeptide is TNF receptor-associated factor homolog 1a (Arabidopsis thaliana (Mouse-ear cress)).